A 365-amino-acid polypeptide reads, in one-letter code: 4-hydroxy-3-methylbut-2-en-1-yl diphosphate synthase (flavodoxin) (365 aa).

[4Fe-4S] cluster contacts are provided by Cys-265, Cys-268, Cys-300, and Glu-307.

This sequence belongs to the IspG family. [4Fe-4S] cluster is required as a cofactor.

The catalysed reaction is (2E)-4-hydroxy-3-methylbut-2-enyl diphosphate + oxidized [flavodoxin] + H2O + 2 H(+) = 2-C-methyl-D-erythritol 2,4-cyclic diphosphate + reduced [flavodoxin]. It participates in isoprenoid biosynthesis; isopentenyl diphosphate biosynthesis via DXP pathway; isopentenyl diphosphate from 1-deoxy-D-xylulose 5-phosphate: step 5/6. Functionally, converts 2C-methyl-D-erythritol 2,4-cyclodiphosphate (ME-2,4cPP) into 1-hydroxy-2-methyl-2-(E)-butenyl 4-diphosphate. The sequence is that of 4-hydroxy-3-methylbut-2-en-1-yl diphosphate synthase (flavodoxin) from Bacillus mycoides (strain KBAB4) (Bacillus weihenstephanensis).